The sequence spans 383 residues: S-adenosylmethionine synthase (383 aa).

Residue His-15 participates in ATP binding. Asp-17 is a Mg(2+) binding site. Glu-43 is a binding site for K(+). 2 residues coordinate L-methionine: Glu-56 and Gln-99. The interval 99–109 (QSPDINQGVDR) is flexible loop. Residues 164–166 (DAK), 230–231 (RF), Asp-239, 245–246 (RK), Ala-262, and Lys-266 each bind ATP. Asp-239 provides a ligand contact to L-methionine. Lys-270 contacts L-methionine.

It belongs to the AdoMet synthase family. Homotetramer; dimer of dimers. Requires Mg(2+) as cofactor. It depends on K(+) as a cofactor.

It localises to the cytoplasm. The catalysed reaction is L-methionine + ATP + H2O = S-adenosyl-L-methionine + phosphate + diphosphate. It participates in amino-acid biosynthesis; S-adenosyl-L-methionine biosynthesis; S-adenosyl-L-methionine from L-methionine: step 1/1. Its function is as follows. Catalyzes the formation of S-adenosylmethionine (AdoMet) from methionine and ATP. The overall synthetic reaction is composed of two sequential steps, AdoMet formation and the subsequent tripolyphosphate hydrolysis which occurs prior to release of AdoMet from the enzyme. The chain is S-adenosylmethionine synthase from Shewanella sp. (strain W3-18-1).